Consider the following 469-residue polypeptide: 3-isopropylmalate dehydratase large subunit (469 aa).

3 residues coordinate [4Fe-4S] cluster: Cys-350, Cys-410, and Cys-413.

Belongs to the aconitase/IPM isomerase family. LeuC type 1 subfamily. In terms of assembly, heterodimer of LeuC and LeuD. [4Fe-4S] cluster is required as a cofactor.

The catalysed reaction is (2R,3S)-3-isopropylmalate = (2S)-2-isopropylmalate. Its pathway is amino-acid biosynthesis; L-leucine biosynthesis; L-leucine from 3-methyl-2-oxobutanoate: step 2/4. Functionally, catalyzes the isomerization between 2-isopropylmalate and 3-isopropylmalate, via the formation of 2-isopropylmaleate. This Rhodopseudomonas palustris (strain ATCC BAA-98 / CGA009) protein is 3-isopropylmalate dehydratase large subunit.